Reading from the N-terminus, the 833-residue chain is Leucine--tRNA ligase (833 aa).

Positions 41–52 (PYPSGAGLHVGH) match the 'HIGH' region motif. Positions 610 to 614 (KMSKS) match the 'KMSKS' region motif. K613 contributes to the ATP binding site.

Belongs to the class-I aminoacyl-tRNA synthetase family.

Its subcellular location is the cytoplasm. The enzyme catalyses tRNA(Leu) + L-leucine + ATP = L-leucyl-tRNA(Leu) + AMP + diphosphate. The chain is Leucine--tRNA ligase from Streptococcus thermophilus (strain CNRZ 1066).